Reading from the N-terminus, the 243-residue chain is Methylthioribulose-1-phosphate dehydratase (243 aa).

The interval 1 to 22 is disordered; that stretch reads MCPADQTVATNNNDHLVQSEDP. Positions 7–16 are enriched in polar residues; the sequence is TVATNNNDHL. C103 is a substrate binding site. Residues H120 and H122 each coordinate Zn(2+). E149 acts as the Proton donor/acceptor in catalysis. H205 provides a ligand contact to Zn(2+).

Belongs to the aldolase class II family. MtnB subfamily. Zn(2+) serves as cofactor.

The protein localises to the cytoplasm. It carries out the reaction 5-(methylsulfanyl)-D-ribulose 1-phosphate = 5-methylsulfanyl-2,3-dioxopentyl phosphate + H2O. It functions in the pathway amino-acid biosynthesis; L-methionine biosynthesis via salvage pathway; L-methionine from S-methyl-5-thio-alpha-D-ribose 1-phosphate: step 2/6. Functionally, catalyzes the dehydration of methylthioribulose-1-phosphate (MTRu-1-P) into 2,3-diketo-5-methylthiopentyl-1-phosphate (DK-MTP-1-P). In Penicillium rubens (strain ATCC 28089 / DSM 1075 / NRRL 1951 / Wisconsin 54-1255) (Penicillium chrysogenum), this protein is Methylthioribulose-1-phosphate dehydratase.